Consider the following 147-residue polypeptide: Deoxyuridine 5'-triphosphate nucleotidohydrolase (147 aa).

Substrate contacts are provided by residues 67–69, Asn80, and 84–86; these read RSG and TID.

The protein belongs to the dUTPase family. It depends on Mg(2+) as a cofactor.

The catalysed reaction is dUTP + H2O = dUMP + diphosphate + H(+). It functions in the pathway pyrimidine metabolism; dUMP biosynthesis; dUMP from dCTP (dUTP route): step 2/2. This enzyme is involved in nucleotide metabolism: it produces dUMP, the immediate precursor of thymidine nucleotides and it decreases the intracellular concentration of dUTP so that uracil cannot be incorporated into DNA. This chain is Deoxyuridine 5'-triphosphate nucleotidohydrolase, found in Anaeromyxobacter sp. (strain Fw109-5).